We begin with the raw amino-acid sequence, 237 residues long: Small ribosomal subunit protein uS3 (237 aa).

Positions 39–107 (IRAYLMEELK…ETHLNIVEVR (69 aa)) constitute a KH type-2 domain. The disordered stretch occupies residues 213-237 (MASERRATESDNQGGGGRDRRRENA).

Belongs to the universal ribosomal protein uS3 family. In terms of assembly, part of the 30S ribosomal subunit. Forms a tight complex with proteins S10 and S14.

Functionally, binds the lower part of the 30S subunit head. Binds mRNA in the 70S ribosome, positioning it for translation. The sequence is that of Small ribosomal subunit protein uS3 from Sinorhizobium fredii (strain NBRC 101917 / NGR234).